Consider the following 265-residue polypeptide: Imidazole glycerol phosphate synthase subunit HisF (265 aa).

Residues Asp-17 and Asp-136 contribute to the active site.

The protein belongs to the HisA/HisF family. Heterodimer of HisH and HisF.

The protein localises to the cytoplasm. It carries out the reaction 5-[(5-phospho-1-deoxy-D-ribulos-1-ylimino)methylamino]-1-(5-phospho-beta-D-ribosyl)imidazole-4-carboxamide + L-glutamine = D-erythro-1-(imidazol-4-yl)glycerol 3-phosphate + 5-amino-1-(5-phospho-beta-D-ribosyl)imidazole-4-carboxamide + L-glutamate + H(+). Its pathway is amino-acid biosynthesis; L-histidine biosynthesis; L-histidine from 5-phospho-alpha-D-ribose 1-diphosphate: step 5/9. IGPS catalyzes the conversion of PRFAR and glutamine to IGP, AICAR and glutamate. The HisF subunit catalyzes the cyclization activity that produces IGP and AICAR from PRFAR using the ammonia provided by the HisH subunit. The protein is Imidazole glycerol phosphate synthase subunit HisF of Mycobacterium avium (strain 104).